The chain runs to 471 residues: uncharacterized protein (471 aa).

12 helical membrane passes run 48-68 (FISA…FTIV), 85-105 (LSGV…YPML), 123-140 (YTMS…YALA), 145-165 (SVAL…MFLY), 186-206 (VVNS…GGLM), 223-243 (SGNW…FACF), 277-297 (FVGC…YFLL), 320-340 (GNFL…FSYL), 349-369 (IILL…TIHY), 379-399 (FIIY…SVSL), 414-434 (VAVQ…GGAF), and 440-460 (VVFF…LLII).

This sequence belongs to the major facilitator superfamily.

It is found in the golgi apparatus. It localises to the membrane. This is an uncharacterized protein from Schizosaccharomyces pombe (strain 972 / ATCC 24843) (Fission yeast).